A 533-amino-acid chain; its full sequence is MSPSGKSSRSLANIAGIVAIATLISKVFGLLREQIIAAAFGVGTVVTAYAYAYVIPGFLFILLGGINGPFHSALVSVLSKRDREEAAPLVETVTTLVSGVLLGVTIILVLGAGIFIDLLAPGLEPETRRMAVQQLQIMAPMALLSGLIGIGFGTLNAADQYLLPSISPLLSSITVILGLGVAVWQLGQQLNTEPYWLLGSLLLAGGTTAGAVLQWLAQIVPQAKAGMGKLRLRFNFALPGVKEVLQVMIPATLSSGMLYINFATNLFFASFIPNAAAAMRYGNFVALTPLGIISNMILVPFLPVFSRLADPQDWPELKLRIRQGIMLSALTMFPLTAILVGLAIPIVQVIYERGAFDAEAAAEVAPVLAAYGLGMFFYLGRDVLVRVFYALGDGNSPFKVSLFNIFLNGLLDYLFYKPFGTVGIVMATVGVNLFSMTIFIWMLNRRLAGLSLGGWAMDLGKLVGVTAIASVAGWQGSVLWQRLWGVNSLVENILEVLTMSSIILVVFTVGVALAKVPEVDLLGDRLWKKFKRV.

Transmembrane regions (helical) follow at residues Leu-11–Leu-31, Ala-39–Ile-61, Leu-96–Ile-116, Leu-135–Leu-155, Ile-166–Leu-186, Trp-196–Leu-216, Leu-253–Pro-273, Phe-284–Val-304, Leu-330–Ile-350, Ala-360–Gly-380, Val-400–Gly-420, Val-422–Met-442, Leu-452–Ala-472, and Ile-493–Leu-513.

It belongs to the MurJ/MviN family.

Its subcellular location is the cell inner membrane. It functions in the pathway cell wall biogenesis; peptidoglycan biosynthesis. Functionally, involved in peptidoglycan biosynthesis. Transports lipid-linked peptidoglycan precursors from the inner to the outer leaflet of the cytoplasmic membrane. In Synechocystis sp. (strain ATCC 27184 / PCC 6803 / Kazusa), this protein is Probable lipid II flippase MurJ.